A 103-amino-acid polypeptide reads, in one-letter code: Nucleoid-associated protein A2cp1_3777 (103 aa).

This sequence belongs to the YbaB/EbfC family. As to quaternary structure, homodimer.

It localises to the cytoplasm. It is found in the nucleoid. Its function is as follows. Binds to DNA and alters its conformation. May be involved in regulation of gene expression, nucleoid organization and DNA protection. This Anaeromyxobacter dehalogenans (strain 2CP-1 / ATCC BAA-258) protein is Nucleoid-associated protein A2cp1_3777.